The primary structure comprises 184 residues: Holliday junction branch migration complex subunit RuvA (184 aa).

The domain I stretch occupies residues 1 to 64 (MIRAIEGIIT…EDANLLYGFL (64 aa)). The interval 65 to 144 (DTNEQKMFEM…SDESVPGYQN (80 aa)) is domain II. Residue Asn144 is a region of interest, flexible linker. The interval 144–184 (NEALLALEALGFKREKIVKILPDLKSTSTSELVKEALKKLA) is domain III.

It belongs to the RuvA family. In terms of assembly, homotetramer. Forms an RuvA(8)-RuvB(12)-Holliday junction (HJ) complex. HJ DNA is sandwiched between 2 RuvA tetramers; dsDNA enters through RuvA and exits via RuvB. An RuvB hexamer assembles on each DNA strand where it exits the tetramer. Each RuvB hexamer is contacted by two RuvA subunits (via domain III) on 2 adjacent RuvB subunits; this complex drives branch migration. In the full resolvosome a probable DNA-RuvA(4)-RuvB(12)-RuvC(2) complex forms which resolves the HJ.

The protein resides in the cytoplasm. In terms of biological role, the RuvA-RuvB-RuvC complex processes Holliday junction (HJ) DNA during genetic recombination and DNA repair, while the RuvA-RuvB complex plays an important role in the rescue of blocked DNA replication forks via replication fork reversal (RFR). RuvA specifically binds to HJ cruciform DNA, conferring on it an open structure. The RuvB hexamer acts as an ATP-dependent pump, pulling dsDNA into and through the RuvAB complex. HJ branch migration allows RuvC to scan DNA until it finds its consensus sequence, where it cleaves and resolves the cruciform DNA. The chain is Holliday junction branch migration complex subunit RuvA from Campylobacter curvus (strain 525.92).